The following is a 130-amino-acid chain: Protein p56 (130 aa).

It belongs to the phi29likevirus protein p56 family. In terms of assembly, homodimer. Interacts with host UDG; this interaction inhibits the uracil-DNA glycosylase.

Its function is as follows. Inhibits the host uracil-DNA glycosylase (UDG), an enzyme which removes uracil residues from DNA by the base excision repair. Interacts with host uracil-DNA glycosylase and prevents the latter from binding to DNA. Since the viral DNA polymerase efficiently incorporates dUMP into DNA, the virus needs to prevent the deleterious effect caused by host UDG when it eliminates uracil residues present in the viral genome. This is Protein p56 from Bacillus phage GA-1 (Bacteriophage GA-1).